Consider the following 270-residue polypeptide: Replication protein A 32 kDa subunit (270 aa).

Methionine 1 carries the post-translational modification N-acetylmethionine. 2 positions are modified to phosphoserine; by PRKDC: serine 4 and serine 8. The disordered stretch occupies residues 20 to 41 (YTQSPGGFGSPTPSQAEKKSRV). Threonine 21 bears the Phosphothreonine; by PRKDC mark. At serine 23 the chain carries Phosphoserine; by CDK2. Serine 29 is subject to Phosphoserine; by CDK1. Serine 33 bears the Phosphoserine; by PRKDC mark. Glycyl lysine isopeptide (Lys-Gly) (interchain with G-Cter in ubiquitin) cross-links involve residues lysine 37 and lysine 38. The OB DNA-binding region spans 74-148 (VTIVGIIRHA…KSLVAFKIIP (75 aa)). The segment at 171-192 (KPNSQASAGRPSMSNPGMSEPG) is disordered. Residues 187–270 (GMSEPGNFSG…DDHFKSTDAE (84 aa)) are interaction with RAD52, TIPIN, UNG and XPA.

Belongs to the replication factor A protein 2 family. Component of the replication protein A complex (RPA/RP-A), a heterotrimeric complex composed of RPA1, RPA2 and RPA3. Interacts with PRPF19; the PRP19-CDC5L complex is recruited to the sites of DNA repair where it ubiquitinates the replication protein A complex (RPA). Interacts with SERTAD3. Interacts with TIPIN. Interacts with TIMELESS. Interacts with PPP4R2; the interaction is direct, DNA damage-dependent and mediates the recruitment of the PP4 catalytic subunit PPP4C. Interacts (hyperphosphorylated) with RAD51. Interacts with SMARCAL1; the interaction is direct and mediates the recruitment to the RPA complex of SMARCAL1. Interacts with RAD52 and XPA; those interactions are direct and associate RAD52 and XPA to the RPA complex. Interacts with FBH1. Interacts with ETAA1; the interaction is direct and promotes ETAA1 recruitment at stalled replication forks. Interacts with DDI2. Interacts (in unphosphorylated form via N-terminus) with EIF4EBP3; the interaction enhances EIF4EBP3-mediated inhibition of EIF4E-mediated mRNA nuclear export. Interacts with nuclear UNG (isoform 2); this interaction mediates UNG recruitment to RPA-coated single-stranded DNA at stalled replication forks. Post-translationally, differentially phosphorylated throughout the cell cycle, becoming phosphorylated at the G1-S transition and dephosphorylated in late mitosis. Mainly phosphorylated at Ser-23 and Ser-29, by cyclin A-CDK2 and cyclin B-CDK1, respectively during DNA replication and mitosis. Dephosphorylation may require the serine/threonine-protein phosphatase 4. Phosphorylation at Ser-23 and Ser-29 is a prerequisite for further phosphorylation. Becomes hyperphosphorylated on additional residues including Ser-4, Ser-8, Thr-21 and Ser-33 in response to DNA damage. Hyperphosphorylation is mediated by ATM, ATR and PRKDC. Primarily recruited to DNA repair nuclear foci as a hypophosphorylated form it undergoes subsequent hyperphosphorylation, catalyzed by ATR. Hyperphosphorylation is required for RAD51 recruitment to chromatin and efficient DNA repair. Phosphorylation at Thr-21 depends upon RFWD3 presence. DNA damage-induced 'Lys-63'-linked polyubiquitination by PRPF19 mediates ATRIP recruitment to the RPA complex at sites of DNA damage and activation of ATR. Ubiquitinated by RFWD3 at stalled replication forks in response to DNA damage: ubiquitination by RFWD3 does not lead to degradation by the proteasome and promotes removal of the RPA complex from stalled replication forks, promoting homologous recombination.

The protein resides in the nucleus. The protein localises to the PML body. Its function is as follows. As part of the heterotrimeric replication protein A complex (RPA/RP-A), binds and stabilizes single-stranded DNA intermediates, that form during DNA replication or upon DNA stress. It prevents their reannealing and in parallel, recruits and activates different proteins and complexes involved in DNA metabolism. Thereby, it plays an essential role both in DNA replication and the cellular response to DNA damage. In the cellular response to DNA damage, the RPA complex controls DNA repair and DNA damage checkpoint activation. Through recruitment of ATRIP activates the ATR kinase a master regulator of the DNA damage response. It is required for the recruitment of the DNA double-strand break repair factors RAD51 and RAD52 to chromatin in response to DNA damage. Also recruits to sites of DNA damage proteins like XPA and XPG that are involved in nucleotide excision repair and is required for this mechanism of DNA repair. Also plays a role in base excision repair (BER) probably through interaction with UNG. Also recruits SMARCAL1/HARP, which is involved in replication fork restart, to sites of DNA damage. May also play a role in telomere maintenance. The chain is Replication protein A 32 kDa subunit from Mus musculus (Mouse).